The chain runs to 445 residues: Reticulon-4 receptor-like 1 (445 aa).

The N-terminal stretch at 1-24 (MLRKGCCVELLLLLLAGELPLSGG) is a signal peptide. The 30-residue stretch at 25-54 (CPRDCVCYPSPMTVSCQAHNFAAIPEGIPE) folds into the LRRNT domain. LRR repeat units lie at residues 55-76 (DSER…HFSP), 77-98 (AMVT…TFEG), 101-123 (HLEE…TFQG), 126-147 (KLHA…IFGG), 150-171 (SLQY…IFVD), 174-195 (NLSH…IFRG), 198-219 (NLDR…AFHD), and 222-243 (RLTT…CLAP). The region spanning 255–306 (NAWDCGCRARSLWEWLRRFRGSSSVVPCATPELRQGQDLKSLRVEDFRNCTG) is the LRRCT domain. Disordered stretches follow at residues 304–380 (CTGP…ELPE) and 401–421 (RPKR…SGVQ). Basic residues-rich tracts occupy residues 352 to 366 (GSKK…HRNR) and 401 to 413 (RPKR…RRTP). Residue Ser424 is the site of GPI-anchor amidated serine attachment. The helical transmembrane segment at 424–444 (SSGTALGVSLLAWILGLVVSL) threads the bilayer. Residues 425-445 (SGTALGVSLLAWILGLVVSLR) constitute a propeptide, removed in mature form.

It belongs to the Nogo receptor family. In terms of assembly, identified in a complex that contains RTN4R, RTN4RL1 and NGFR; the interaction depends on the presence of chondroitin sulfate proteoglycans. Does not interact with MAG, OMG and RTN4. In terms of tissue distribution, detected in brain (at protein level). Expressed in various regions of the brain, including the cerebral cortex, hippocampus, striatum, thalamus and cerebellum.

It is found in the cell membrane. The protein localises to the membrane raft. Its subcellular location is the perikaryon. The protein resides in the cell projection. In terms of biological role, cell surface receptor. Plays a functionally redundant role in postnatal brain development and in regulating axon regeneration in the adult central nervous system. Contributes to normal axon migration across the brain midline and normal formation of the corpus callosum. Protects motoneurons against apoptosis; protection against apoptosis is probably mediated by MAG. Plays a role in inhibiting neurite outgrowth and axon regeneration via its binding to neuronal chondroitin sulfate proteoglycans. Binds heparin. Like other family members, plays a role in restricting the number dendritic spines and the number of synapses that are formed during brain development. Signaling mediates activation of Rho and downstream reorganization of the actin cytoskeleton. The polypeptide is Reticulon-4 receptor-like 1 (Rattus norvegicus (Rat)).